Reading from the N-terminus, the 274-residue chain is MQQLQNVIESAFERRADITPANVDTVTREAVNQVISLLDSGALRVAEKIDGQWVTHQWLKKAVLLSFRINDNQVIDGAESRYFDKVPMKFADYDEARFQKEGFRVVPPAAVRQGAFIARNTVLMPSYVNIGAFVDEGTMVDTWATVGSCAQIGKNVHLSGGVGIGGVLEPLQANPTIIEDNCFIGARSEVVEGVIVEEGSVISMGVYIGQSTRIYDRETGEIHYGRVPAGSVVVSGNLPSKDGKYSLYCAVIVKKVDAKTRGKVGINELLRTID.

2 residues coordinate substrate: Arg-104 and Asp-141.

It belongs to the transferase hexapeptide repeat family. Homotrimer.

It is found in the cytoplasm. The enzyme catalyses (S)-2,3,4,5-tetrahydrodipicolinate + succinyl-CoA + H2O = (S)-2-succinylamino-6-oxoheptanedioate + CoA. It functions in the pathway amino-acid biosynthesis; L-lysine biosynthesis via DAP pathway; LL-2,6-diaminopimelate from (S)-tetrahydrodipicolinate (succinylase route): step 1/3. The protein is 2,3,4,5-tetrahydropyridine-2,6-dicarboxylate N-succinyltransferase of Citrobacter koseri (strain ATCC BAA-895 / CDC 4225-83 / SGSC4696).